A 249-amino-acid polypeptide reads, in one-letter code: BPI fold-containing family A member 1 (249 aa).

Positions 1-15 (MFQVAGLIVFCGLLA) are cleaved as a signal peptide. Residues 81 to 86 (LLGGLL) form an important for surfactant activity and antibacterial properties region. N-linked (GlcNAc...) asparagine glycosylation is present at Asn-151. An intrachain disulfide couples Cys-173 to Cys-217.

Belongs to the BPI/LBP/Plunc superfamily. Plunc family. In terms of assembly, monomer. Interacts (via N-terminus) with SCNN1B, a subunit of the heterotrimeric epithelial sodium channel (ENaC); this inhibits proteolytic activation of ENaC. Expressed in lung and trachea.

It localises to the secreted. In terms of biological role, lipid-binding protein which shows high specificity for the surfactant phospholipid dipalmitoylphosphatidylcholine (DPPC). Plays a role in the innate immune responses of the upper airways. Reduces the surface tension in secretions from airway epithelia and inhibits the formation of biofilm by pathogenic Gram-negative bacteria, such as P.aeruginosa and K.pneumoniae. Negatively regulates proteolytic cleavage of SCNN1G, an event that is required for activation of the epithelial sodium channel (ENaC), and thereby contributes to airway surface liquid homeostasis and proper clearance of mucus. Plays a role in the airway inflammatory response after exposure to irritants. May attract macrophages and neutrophils. The protein is BPI fold-containing family A member 1 (BPIFA1) of Sus scrofa (Pig).